Reading from the N-terminus, the 1151-residue chain is Syntaxin-binding protein 5 (1151 aa).

The tract at residues 14–34 is disordered; it reads TAGSSSASQQQQQQHPPGNRE. The span at 17-27 shows a compositional bias: low complexity; that stretch reads SSSASQQQQQQ. 10 WD repeats span residues 61 to 94, 101 to 140, 145 to 181, 200 to 234, 240 to 272, 294 to 336, 344 to 378, 400 to 477, 505 to 619, and 633 to 695; these read SALA…CYCQ, VIQL…SLKF, VTFC…GYVI, HISD…DYRY, IHSV…PAKP, PILK…KSTA, IVDF…LIDL, TCCE…YKLK, QIIS…ELVI, and TSLA…SGAG. Disordered regions lie at residues 555 to 595 and 674 to 729; these read ETPE…GLRD and SNDP…EQKM. S692 carries the phosphoserine modification. Residues 712-721 are compositionally biased toward low complexity; that stretch reads SPTSGSSSPH. The residue at position 723 (S723) is a Phosphoserine; by PKA. S759 carries the phosphoserine modification. The residue at position 762 (T762) is a Phosphothreonine. S782 bears the Phosphoserine mark. T784 is modified (phosphothreonine). S785 is modified (phosphoserine). WD repeat units follow at residues 794–851, 860–934, 939–983, and 997–1020; these read ISAL…SGTI, RMAF…QNCA, ITET…LDVY, and CFTN…TYSQ. A compositionally biased stretch (basic and acidic residues) spans 881 to 892; that stretch reads HNVPEEKDEKEK. Residues 881 to 906 form a disordered region; that stretch reads HNVPEEKDEKEKLKKRRPVSVSPSSS. 2 positions are modified to phosphoserine: S900 and S902. T1039 is modified (phosphothreonine). Phosphoserine occurs at positions 1058 and 1131. The v-SNARE coiled-coil homology domain maps to 1086-1146; sequence GIEGVKGAAS…HEIMLKYKDK (61 aa).

The protein belongs to the WD repeat L(2)GL family. In terms of assembly, interacts with STX1A and STX1B via its v-SNARE homology domain. Part of a complex that contains STX1, STXBP5, SNAP25 and SYT1. Part of a complex that contains STXBP5, STX4A and SNAP23.

It localises to the cytoplasm. The protein localises to the cell membrane. Its subcellular location is the cytoplasmic vesicle membrane. It is found in the cytoplasmic vesicle. The protein resides in the secretory vesicle. It localises to the synaptic vesicle. The protein localises to the synapse. In terms of biological role, plays a regulatory role in calcium-dependent exocytosis and neurotransmitter release. Inhibits membrane fusion between transport vesicles and the plasma membrane. May modulate the assembly of trans-SNARE complexes between transport vesicles and the plasma membrane. Inhibits translocation of GLUT4 from intracellular vesicles to the plasma membrane. Competes with STXBP1 for STX1 binding. This is Syntaxin-binding protein 5 (STXBP5) from Homo sapiens (Human).